The sequence spans 102 residues: MVYAIVRAGGRQEKVSVGDFVTLNRVPGGAGSTIELPALLLVDGDKVTSAAADLAKVTVTAEILQDLRGPKIVIQKFKNKTGYKKRQGHRQELTKVKITGIK.

The protein belongs to the bacterial ribosomal protein bL21 family. In terms of assembly, part of the 50S ribosomal subunit. Contacts protein L20.

In terms of biological role, this protein binds to 23S rRNA in the presence of protein L20. The sequence is that of Large ribosomal subunit protein bL21 from Arthrobacter sp. (strain FB24).